A 316-amino-acid chain; its full sequence is Olfactory receptor 5AP2 (316 aa).

At 1 to 34 the chain is on the extracellular side; the sequence is MRLMKEVRGRNQTEVTEFLLLGLSDNPDLQGVLF. Asn-11 is a glycosylation site (N-linked (GlcNAc...) asparagine). Residues 35–55 form a helical membrane-spanning segment; it reads ALFLLIYMANMVGNLGMIVLI. Residue Lys-56 is a topological domain, cytoplasmic. The chain crosses the membrane as a helical span at residues 57–77; it reads IDLCLHTPMYFFLSSLSFVDA. At 78-104 the chain is on the extracellular side; that stretch reads SYSSSVTPKMLVNLMAENKAISFHGCA. Cys-103 and Cys-195 are joined by a disulfide. Residues 105 to 125 form a helical membrane-spanning segment; that stretch reads AQFYFFGSFLGTECFLLAMMA. At 126-135 the chain is on the cytoplasmic side; that stretch reads YDRYAAIWNP. Residues 136 to 156 form a helical membrane-spanning segment; that stretch reads LLYPVLVSGRICFLLIATSFL. Over 157–210 the chain is Extracellular; that stretch reads AGCGNAAIHTGMTFRLSFCGSNRINHFYCDTPPLLKLSCSDTHFNGIVIMAFSS. Residues 211-231 form a helical membrane-spanning segment; sequence FIVISCVMIVLISYLCIFIAV. Over 232-245 the chain is Cytoplasmic; sequence LKMPSLEGRHKAFS. A helical transmembrane segment spans residues 246–266; the sequence is TCASYLMAVTIFFGTILFMYL. At 267–278 the chain is on the extracellular side; sequence RPTSSYSMEQDK. Residues 279–299 form a helical membrane-spanning segment; the sequence is VVSVFYTVIIPVLNPLIYSLK. Residues 300–316 lie on the Cytoplasmic side of the membrane; that stretch reads NKDVKKALKKILWKHIL.

It belongs to the G-protein coupled receptor 1 family.

It is found in the cell membrane. Its function is as follows. Odorant receptor. This Homo sapiens (Human) protein is Olfactory receptor 5AP2.